A 249-amino-acid polypeptide reads, in one-letter code: Vacuolar iron transporter homolog 3 (249 aa).

The disordered stretch occupies residues 1-32; the sequence is MAMQMNSVVHVSTSPSPSPATSPPPEGKQEHG. The Cytoplasmic portion of the chain corresponds to 1 to 74; the sequence is MAMQMNSVVH…SGRAQWLRAA (74 aa). Residues 16–26 are compositionally biased toward pro residues; it reads SPSPATSPPPE. Residues 75–95 form a helical membrane-spanning segment; sequence VLGANDGLVSVASLMIGVGAV. At 96-102 the chain is on the vacuolar side; the sequence is SESGRAM. A helical transmembrane segment spans residues 103–123; that stretch reads LVSGVAGLVAGACSMAIGEFV. Residues 124 to 166 are Cytoplasmic-facing; the sequence is SVYAQYDIEVAAARRRRRQRRRRCDGDGEEEGSGRLPSPFKAA. The chain crosses the membrane as a helical span at residues 167–187; the sequence is AASALAFTVGALLPLLAGGFV. The Vacuolar segment spans residues 188-193; that stretch reads RPWAPR. A helical transmembrane segment spans residues 194–214; sequence VAAVCAATSAALAGFGALGAA. The Cytoplasmic segment spans residues 215–226; it reads LGGASPARSAAR. Residues 227–247 form a helical membrane-spanning segment; sequence VLLGGWAAMAACYGVLRLFAN. Residues 248-249 are Vacuolar-facing; that stretch reads LY.

Belongs to the CCC1 family.

The protein localises to the vacuole membrane. It carries out the reaction Fe(2+)(in) = Fe(2+)(out). In terms of biological role, probable vacuolar iron transporter that may be involved in the regulation of iron distribution throughout the plant. The protein is Vacuolar iron transporter homolog 3 of Oryza sativa subsp. japonica (Rice).